A 511-amino-acid chain; its full sequence is Bifunctional purine biosynthesis protein PurH (511 aa).

The MGS-like domain maps to 1–146 (MGRLALISVT…KNFAHLTVIS (146 aa)).

Belongs to the PurH family.

The catalysed reaction is (6R)-10-formyltetrahydrofolate + 5-amino-1-(5-phospho-beta-D-ribosyl)imidazole-4-carboxamide = 5-formamido-1-(5-phospho-D-ribosyl)imidazole-4-carboxamide + (6S)-5,6,7,8-tetrahydrofolate. The enzyme catalyses IMP + H2O = 5-formamido-1-(5-phospho-D-ribosyl)imidazole-4-carboxamide. Its pathway is purine metabolism; IMP biosynthesis via de novo pathway; 5-formamido-1-(5-phospho-D-ribosyl)imidazole-4-carboxamide from 5-amino-1-(5-phospho-D-ribosyl)imidazole-4-carboxamide (10-formyl THF route): step 1/1. It participates in purine metabolism; IMP biosynthesis via de novo pathway; IMP from 5-formamido-1-(5-phospho-D-ribosyl)imidazole-4-carboxamide: step 1/1. This is Bifunctional purine biosynthesis protein PurH from Microcystis aeruginosa (strain NIES-843 / IAM M-2473).